A 355-amino-acid chain; its full sequence is (R,S)-reticuline 7-O-methyltransferase (355 aa).

S-adenosyl-L-methionine contacts are provided by residues Val197–Gly200, Asp221, Asp221–Leu222, Asp241–Met242, and Lys255. His259 functions as the Proton acceptor in the catalytic mechanism.

The protein belongs to the class I-like SAM-binding methyltransferase superfamily. Cation-independent O-methyltransferase family. In terms of assembly, homodimer. In terms of tissue distribution, expressed in capsules, buds and stems, and at lower levels in leaves. Localized to parenchyma cells within the vascular bundle, but only to those cells distal to laticifers. In roots, found in the pericycle within the stele.

The catalysed reaction is (S)-reticuline + S-adenosyl-L-methionine = (S)-laudanine + S-adenosyl-L-homocysteine + H(+). It catalyses the reaction (R)-reticuline + S-adenosyl-L-methionine = (R)-laudanine + S-adenosyl-L-homocysteine + H(+). Catalyzes the transfer of a methyl group to reticuline to form laudanine. Methylates the simple catechols guaiacol and isovanillic acid as well as the tetrahydrobenzylisoquinolines (R)-reticuline, (S)-reticuline, (R,S)-orientaline, (R)-protosinomenine and (R,S)-isoorientaline. Involved in the production of laudanine. This Papaver somniferum (Opium poppy) protein is (R,S)-reticuline 7-O-methyltransferase.